A 278-amino-acid chain; its full sequence is UPF0276 protein Swit_4400 (278 aa).

The protein belongs to the UPF0276 family.

The polypeptide is UPF0276 protein Swit_4400 (Rhizorhabdus wittichii (strain DSM 6014 / CCUG 31198 / JCM 15750 / NBRC 105917 / EY 4224 / RW1) (Sphingomonas wittichii)).